The following is a 287-amino-acid chain: Putative glutamate--cysteine ligase regulatory subunit (287 aa).

It belongs to the aldo/keto reductase family. Glutamate--cysteine ligase light chain subfamily. In terms of assembly, heterodimer of a catalytic heavy chain and a regulatory light chain.

It is found in the cytoplasm. Its pathway is sulfur metabolism; glutathione biosynthesis; glutathione from L-cysteine and L-glutamate: step 1/2. The sequence is that of Putative glutamate--cysteine ligase regulatory subunit from Schizosaccharomyces pombe (strain 972 / ATCC 24843) (Fission yeast).